Here is a 457-residue protein sequence, read N- to C-terminus: MVKDLVGYRFYPTGEELINHYLKNKILGKTWLVDEAISEINICSYDPIYLPSLSKIKSDDPVWYFFCPKEYTSAKKKVTKRTTSSGYWKATGVDRKIKDKRGNRGEIGIKKTLVYYEGRVPKGVWTPWVMHEYHITCLPQDQRNYVICQVMYKGEDGDVPSGGNNSSEPSQSLVSDSNTVRATSPTALEFEKPGQENFFGMSVDDLGTPKNEQEDFSLWDVLDPDMLFSDNNNPTVHPQAPHLTPNDDEFLGGLRHVNREQVEYLFANEDFISRPTLSMTENRNDHRPKKALSGIIVDYSSDSNSDAESISATSYQGTSSPGDDSVGSSNRQFLQTGGDEILSSCNDLQTYGEPSISSSTRQSQLTRSIIRPKQEVKQDTSRAVDSDTSIDKESSMVKTEKKSWFITEEAMERNRNNPRYIYLMRMIIGFILLLALISNIISVLQNLNPAMKFDRER.

In terms of domain architecture, NAC spans 4–153; that stretch reads DLVGYRFYPT…NYVICQVMYK (150 aa). A DNA-binding region spans residues 107-159; it reads IGIKKTLVYYEGRVPKGVWTPWVMHEYHITCLPQDQRNYVICQVMYKGEDGDV. Disordered regions lie at residues 158–180 and 302–332; these read DVPS…SNTV and DSNS…SNRQ. The segment covering 162-180 has biased composition (polar residues); it reads GGNNSSEPSQSLVSDSNTV. Low complexity predominate over residues 302-311; sequence DSNSDAESIS. Positions 312 to 332 are enriched in polar residues; sequence ATSYQGTSSPGDDSVGSSNRQ. A helical membrane pass occupies residues 421–441; the sequence is IYLMRMIIGFILLLALISNII.

The protein resides in the membrane. It localises to the nucleus. Transcription activator activated by proteolytic cleavage through regulated intramembrane proteolysis (RIP). Involved in salt stress response during seed germination and seedling growth. Binds the auxin-responsive IAA30 gene promoter and may serve as a molecular link that interconnects a developmental feedback loop of auxin signaling with a salt signal transduction pathway during seed germination. The chain is NAC domain-containing protein 69 (NAC69) from Arabidopsis thaliana (Mouse-ear cress).